A 701-amino-acid polypeptide reads, in one-letter code: E3 ubiquitin-protein ligase RNF19B (701 aa).

The disordered stretch occupies residues 1 to 97 (MGSEKDSESP…PAEPLSTSQA (97 aa)). A required for ubiquitin ligase activity and for protection against staurosporin-induced cell death region spans residues 1–304 (MGSEKDSESP…VCGCEFCWLC (304 aa)). The segment covering 57–72 (QQLHQQQQIQQQQLLQ) has biased composition (low complexity). Positions 103–323 (ELLECPLCLV…LSPSGCTFWG (221 aa)) are TRIAD supradomain. Zn(2+) is bound by residues Cys107, Cys110, Cys130, Cys133, Cys194, Cys199, Cys216, Cys221, Cys226, Cys229, His234, Cys239, Cys273, and Cys276. The segment at 107–156 (CPLCLVRQPAEQLPELQGCSHRSCLCCLRQYLRIEITESRVQLSCPECAE) adopts an RING-type 1 zinc-finger fold. The segment at 174 to 239 (EKYEEFLLRR…KQAWHPNQTC (66 aa)) adopts an IBR-type zinc-finger fold. An RING-type 2; atypical zinc finger spans residues 273–304 (CPRCGAYIIKMNDGSCNHMTCAVCGCEFCWLC). The active site involves Cys288. Residues Cys293, Cys296, Cys301, Cys304, His312, and Cys319 each coordinate Zn(2+). Transmembrane regions (helical) follow at residues 340–360 (LIGA…AMVI) and 396–416 (IITA…IMLA). Disordered regions lie at residues 472–495 (LEGA…PGGL) and 658–677 (AELT…HGAP).

Belongs to the RBR family. RNF19 subfamily. In terms of assembly, interacts with UBE2L3, UBE2L6 and UCKL1.

The protein resides in the cytoplasmic granule membrane. It localises to the endoplasmic reticulum membrane. The enzyme catalyses [E2 ubiquitin-conjugating enzyme]-S-ubiquitinyl-L-cysteine + [acceptor protein]-L-lysine = [E2 ubiquitin-conjugating enzyme]-L-cysteine + [acceptor protein]-N(6)-ubiquitinyl-L-lysine.. The protein operates within protein modification; protein ubiquitination. E3 ubiquitin-protein ligase which accepts ubiquitin from E2 ubiquitin-conjugating enzymes UBE2L3 and UBE2L6 in the form of a thioester and then directly transfers the ubiquitin to targeted substrates, such as UCKL1. Involved in the cytolytic activity of natural killer cells and cytotoxic T-cells. Protects against staurosporin-induced cell death. The polypeptide is E3 ubiquitin-protein ligase RNF19B (rnf19b) (Danio rerio (Zebrafish)).